A 326-amino-acid chain; its full sequence is Tagatose 1,6-diphosphate aldolase 2 (326 aa).

The protein belongs to the aldolase LacD family.

It carries out the reaction D-tagatofuranose 1,6-bisphosphate = D-glyceraldehyde 3-phosphate + dihydroxyacetone phosphate. It participates in carbohydrate metabolism; D-tagatose 6-phosphate degradation; D-glyceraldehyde 3-phosphate and glycerone phosphate from D-tagatose 6-phosphate: step 2/2. This is Tagatose 1,6-diphosphate aldolase 2 (lacD2) from Streptococcus agalactiae serotype III (strain NEM316).